An 81-amino-acid chain; its full sequence is ATP synthase subunit C, plastid (81 aa).

The next 2 membrane-spanning stretches (helical) occupy residues 3 to 23 (PIISAASVIAAGFAVGLASIG) and 57 to 77 (LAFMEALTIYGLVVALALLFA).

Belongs to the ATPase C chain family. In terms of assembly, F-type ATPases have 2 components, F(1) - the catalytic core - and F(0) - the membrane proton channel. F(1) has five subunits: alpha(3), beta(3), gamma(1), delta(1), epsilon(1). F(0) has four main subunits: a(1), b(1), b'(1) and c(10-14). The alpha and beta chains form an alternating ring which encloses part of the gamma chain. F(1) is attached to F(0) by a central stalk formed by the gamma and epsilon chains, while a peripheral stalk is formed by the delta, b and b' chains.

The protein localises to the plastid membrane. In terms of biological role, f(1)F(0) ATP synthase produces ATP from ADP in the presence of a proton or sodium gradient. F-type ATPases consist of two structural domains, F(1) containing the extramembraneous catalytic core and F(0) containing the membrane proton channel, linked together by a central stalk and a peripheral stalk. During catalysis, ATP synthesis in the catalytic domain of F(1) is coupled via a rotary mechanism of the central stalk subunits to proton translocation. Its function is as follows. Key component of the F(0) channel; it plays a direct role in translocation across the membrane. A homomeric c-ring of between 10-14 subunits forms the central stalk rotor element with the F(1) delta and epsilon subunits. This Cuscuta gronovii (Common dodder) protein is ATP synthase subunit C, plastid.